Here is a 457-residue protein sequence, read N- to C-terminus: GTPase Der (457 aa).

2 consecutive EngA-type G domains span residues 4 to 169 (PTIA…PENN) and 177 to 352 (IMMS…NQHR). GTP-binding positions include 10–17 (GRPNVGKS), 57–61 (DTGGL), 120–123 (NKCE), 183–190 (GRPNVGKS), 230–234 (DTAGI), and 295–298 (NKWD). Positions 353–438 (RRVTTSVVNE…PLILLWRGKQ (86 aa)) constitute a KH-like domain.

This sequence belongs to the TRAFAC class TrmE-Era-EngA-EngB-Septin-like GTPase superfamily. EngA (Der) GTPase family. Associates with the 50S ribosomal subunit.

Functionally, GTPase that plays an essential role in the late steps of ribosome biogenesis. This chain is GTPase Der, found in Prochlorococcus marinus (strain AS9601).